The primary structure comprises 519 residues: Cytochrome P450 monooxygenase FPY7 (519 aa).

Residues 12–34 (SLSLRWKIIVTLLAIYTLRIIGT) traverse the membrane as a helical segment. Cysteine 465 contributes to the heme binding site.

Belongs to the cytochrome P450 family. It depends on heme as a cofactor.

The protein resides in the membrane. Its pathway is secondary metabolite biosynthesis. Its function is as follows. Cytochrome P450 monooxygenase; part of the gene cluster that mediates the biosynthesis of the gamma-pyrones fusapyrone (FPY) and deoxyfusapyrone (dFPY). FPY is an undecaketide and thus likely synthesized by the polyketide synthase FPY1 from acetyl-CoA functioning as starter unit and the addition of 10 malonyl-CoA extender units by successive Claisen-condensations. Next to this, FPY shares some rare features: C-glycosylated 4-deoxyglucose at C-3, a gem-dimethyl group at C-13, and an alpha-beta to beta-gamma double bond shift at C-20. During FPY biosynthesis mono-C-methyl groups are transferred to the tetra-, penta-, hexa- and heptaketide, while two C-methyl groups are transferred to the nonaketide, suggesting that the CMet domain is programmed to selectively catalyze two successive C-alpha-methylation reactions of the nonaketide, while other alpha-carbons are non- or mono-methylated only. While the origin of the 4'-deoxyglucose moiety remains opaque, its transfer to C-3 is most likely mediated by the C-glycosyltransferase FPY2. Next to this, the hydroxyl group present at C-33 and discriminating between FPY and dFPY, is likely to be installed by the cytochrome P450 monooxygenase FPY7. No putative function can be predicted for the remaining genes FPY3-FPY6. This chain is Cytochrome P450 monooxygenase FPY7, found in Fusarium mangiferae (Mango malformation disease fungus).